The primary structure comprises 269 residues: Glutamate racemase (269 aa).

Substrate-binding positions include 13-14 (DS) and 45-46 (YS). Residue Cys77 is the Proton donor/acceptor of the active site. 78–79 (NT) provides a ligand contact to substrate. The active-site Proton donor/acceptor is the Cys188. 189–190 (TH) is a substrate binding site.

The protein belongs to the aspartate/glutamate racemases family.

It catalyses the reaction L-glutamate = D-glutamate. It participates in cell wall biogenesis; peptidoglycan biosynthesis. Its function is as follows. Provides the (R)-glutamate required for cell wall biosynthesis. This Pasteurella multocida (strain Pm70) protein is Glutamate racemase.